The primary structure comprises 305 residues: PI-PLC X domain-containing protein 1 (305 aa).

Residues 1–24 form the signal peptide; the sequence is MSMSTLRHFLWLGALLLATIQVSA. In terms of domain architecture, PI-PLC X-box spans 25-189; the sequence is LPTAQDLICN…RLIVFVDSKA (165 aa). Catalysis depends on residues His53 and His97. N-linked (GlcNAc...) asparagine glycosylation is present at Asn237.

The protein resides in the secreted. The sequence is that of PI-PLC X domain-containing protein 1 from Arthroderma benhamiae (strain ATCC MYA-4681 / CBS 112371) (Trichophyton mentagrophytes).